The following is a 1383-amino-acid chain: Palladin (1383 aa).

3 disordered regions span residues methionine 1–lysine 22, aspartate 52–cysteine 169, and phenylalanine 183–glycine 238. Over residues histidine 78–aspartate 96 the composition is skewed to basic and acidic residues. Positions arginine 191 to aspartate 201 are enriched in polar residues. Phosphoserine is present on serine 192. Over residues glutamine 210 to proline 223 the composition is skewed to low complexity. The Ig-like C2-type 1 domain maps to proline 271–phenylalanine 360. An intrachain disulfide couples cysteine 292 to cysteine 344. A Phosphoserine modification is found at serine 401. The Ig-like C2-type 2 domain maps to proline 440–threonine 539. Cysteine 462 and cysteine 521 are disulfide-bonded. The interval phenylalanine 562 to proline 566 is interaction with VASP. 3 disordered regions span residues glutamate 609–proline 653, alanine 673–serine 728, and alanine 740–histidine 846. Serine 632 is modified (phosphoserine). Threonine 635 bears the Phosphothreonine mark. Position 641 is a phosphoserine (serine 641). The segment at proline 646 to arginine 676 is interaction with LASP1. An interaction with SORBS2, SPIN90 and SRC region spans residues arginine 676–alanine 696. The span at glutamine 677–phenylalanine 697 shows a compositional bias: pro residues. Serine 684, serine 688, and serine 728 each carry phosphoserine. A compositionally biased stretch (low complexity) spans proline 745–serine 763. Residues serine 766–proline 831 are interaction with EPS8. The interaction with SORBS2, SPIN90, SRC and PFN1 stretch occupies residues serine 796–proline 831. 2 stretches are compositionally biased toward pro residues: residues proline 797–phenylalanine 807 and aspartate 817–serine 830. An interaction with VASP region spans residues phenylalanine 819–proline 823. Polar residues predominate over residues glycine 832–histidine 846. Positions glutamine 833–arginine 890 are interaction with ACTN. Phosphoserine is present on residues serine 893, serine 979, and serine 984. In terms of domain architecture, Ig-like C2-type 3 spans proline 1001–serine 1085. Positions asparagine 1096 to asparagine 1125 are disordered. Residues arginine 1098–histidine 1108 show a composition bias toward low complexity. Phosphoserine is present on residues serine 1101, serine 1104, serine 1106, and serine 1116. Phosphoserine; by PKB/AKT1 is present on serine 1118. Serine 1121 carries the post-translational modification Phosphoserine. Ig-like C2-type domains follow at residues proline 1135–alanine 1226 and proline 1233–aspartate 1324. Interaction with EZR stretches follow at residues phenylalanine 1137–alanine 1226 and phenylalanine 1236–tyrosine 1326. Residues cysteine 1156 and cysteine 1208 are joined by a disulfide bond. Phosphoserine is present on serine 1352.

It belongs to the myotilin/palladin family. As to quaternary structure, interacts with EPS8. Interacts with LASP1. Interacts with VASP. Interacts with ACTN. Interacts with SORBS2. Interacts with PFN1. Interacts with LPP. Interacts with SPIN90. Interacts with SRC. Interacts with EZR. Interacts with RAI14. In terms of processing, phosphorylated predominantly on serines and, to a lesser extent, on tyrosines. Phosphorylation at Ser-1118 by PKB/AKT1 modulates cytoskeletal organization and cell motility. As to expression, detected in both muscle and non-muscle tissues. High expression in prostate, ovary, colon, and kidney. Not detected in spleen, skeletal muscle, lung and peripheral blood lymphocytes (at protein level). Protein is overexpressed in FA6, HPAF, IMIM-PC2, SUIT-2 and PancTu-II sporadic pancreatic cancer cell lines.

Its subcellular location is the cytoplasm. The protein localises to the cytoskeleton. It is found in the cell junction. It localises to the focal adhesion. The protein resides in the myofibril. Its subcellular location is the sarcomere. The protein localises to the z line. It is found in the cell projection. It localises to the ruffle. The protein resides in the podosome. Its subcellular location is the lamellipodium. The protein localises to the axon. It is found in the growth cone. Its function is as follows. Cytoskeletal protein required for organization of normal actin cytoskeleton. Roles in establishing cell morphology, motility, cell adhesion and cell-extracellular matrix interactions in a variety of cell types. May function as a scaffolding molecule with the potential to influence both actin polymerization and the assembly of existing actin filaments into higher-order arrays. Binds to proteins that bind to either monomeric or filamentous actin. Localizes at sites where active actin remodeling takes place, such as lamellipodia and membrane ruffles. Different isoforms may have functional differences. Involved in the control of morphological and cytoskeletal changes associated with dendritic cell maturation. Involved in targeting ACTN to specific subcellular foci. This chain is Palladin (PALLD), found in Homo sapiens (Human).